The primary structure comprises 274 residues: Nitrogenase iron protein (274 aa).

Gly8–Ser15 lines the ATP pocket. Cys94 serves as a coordination point for [4Fe-4S] cluster. The residue at position 97 (Arg97) is an ADP-ribosylarginine; by dinitrogenase reductase ADP-ribosyltransferase. A [4Fe-4S] cluster-binding site is contributed by Cys131.

It belongs to the NifH/BchL/ChlL family. Homodimer. Requires [4Fe-4S] cluster as cofactor. In terms of processing, the reversible ADP-ribosylation of Arg-97 inactivates the nitrogenase reductase and regulates nitrogenase activity.

The enzyme catalyses N2 + 8 reduced [2Fe-2S]-[ferredoxin] + 16 ATP + 16 H2O = H2 + 8 oxidized [2Fe-2S]-[ferredoxin] + 2 NH4(+) + 16 ADP + 16 phosphate + 6 H(+). Its function is as follows. The key enzymatic reactions in nitrogen fixation are catalyzed by the nitrogenase complex, which has 2 components: the iron protein and the molybdenum-iron protein. This is Nitrogenase iron protein from Pelodictyon phaeoclathratiforme (strain DSM 5477 / BU-1).